The sequence spans 183 residues: Peptidyl-tRNA hydrolase (183 aa).

Tyrosine 14 contributes to the tRNA binding site. The active-site Proton acceptor is histidine 19. TRNA is bound by residues phenylalanine 64 and asparagine 66.

Belongs to the PTH family. In terms of assembly, monomer.

Its subcellular location is the cytoplasm. It carries out the reaction an N-acyl-L-alpha-aminoacyl-tRNA + H2O = an N-acyl-L-amino acid + a tRNA + H(+). Hydrolyzes ribosome-free peptidyl-tRNAs (with 1 or more amino acids incorporated), which drop off the ribosome during protein synthesis, or as a result of ribosome stalling. Its function is as follows. Catalyzes the release of premature peptidyl moieties from peptidyl-tRNA molecules trapped in stalled 50S ribosomal subunits, and thus maintains levels of free tRNAs and 50S ribosomes. The sequence is that of Peptidyl-tRNA hydrolase from Syntrophomonas wolfei subsp. wolfei (strain DSM 2245B / Goettingen).